We begin with the raw amino-acid sequence, 113 residues long: Probable mesentericin-Y105 immunity protein (113 aa).

This sequence belongs to the immunity protein EntA family.

Imparts immunity to mesentericin-Y105 to naturally sensitive host strains. The chain is Probable mesentericin-Y105 immunity protein (mesI) from Leuconostoc mesenteroides.